Consider the following 217-residue polypeptide: Thymidylate kinase (217 aa).

Residue 7–14 (GIEGAGKS) coordinates ATP.

It belongs to the thymidylate kinase family.

It carries out the reaction dTMP + ATP = dTDP + ADP. Phosphorylation of dTMP to form dTDP in both de novo and salvage pathways of dTTP synthesis. The sequence is that of Thymidylate kinase from Desulfovibrio desulfuricans (strain ATCC 27774 / DSM 6949 / MB).